The sequence spans 608 residues: Aspartate--tRNA(Asp/Asn) ligase (608 aa).

Glutamate 187 contacts L-aspartate. The tract at residues 211 to 214 (QQFK) is aspartate. The L-aspartate site is built by arginine 233 and histidine 461. Residue 233–235 (RDE) coordinates ATP. Glutamate 495 contributes to the ATP binding site. Position 502 (arginine 502) interacts with L-aspartate. ATP is bound at residue 547 to 550 (GLDR).

The protein belongs to the class-II aminoacyl-tRNA synthetase family. Type 1 subfamily. As to quaternary structure, homodimer.

It is found in the cytoplasm. It carries out the reaction tRNA(Asx) + L-aspartate + ATP = L-aspartyl-tRNA(Asx) + AMP + diphosphate. Aspartyl-tRNA synthetase with relaxed tRNA specificity since it is able to aspartylate not only its cognate tRNA(Asp) but also tRNA(Asn). Reaction proceeds in two steps: L-aspartate is first activated by ATP to form Asp-AMP and then transferred to the acceptor end of tRNA(Asp/Asn). This Prosthecochloris aestuarii (strain DSM 271 / SK 413) protein is Aspartate--tRNA(Asp/Asn) ligase.